Here is a 385-residue protein sequence, read N- to C-terminus: Ethanolamine kinase 2 (385 aa).

This sequence belongs to the choline/ethanolamine kinase family.

It carries out the reaction ethanolamine + ATP = phosphoethanolamine + ADP + H(+). Its pathway is phospholipid metabolism; phosphatidylethanolamine biosynthesis; phosphatidylethanolamine from ethanolamine: step 1/3. Functionally, highly specific for ethanolamine phosphorylation. Does not have choline kinase activity. This is Ethanolamine kinase 2 (Etnk2) from Rattus norvegicus (Rat).